The primary structure comprises 214 residues: Ribosomal RNA small subunit methyltransferase G (214 aa).

S-adenosyl-L-methionine contacts are provided by residues Gly-81, Met-86, 132-133 (VE), and Arg-147.

It belongs to the methyltransferase superfamily. RNA methyltransferase RsmG family.

Its subcellular location is the cytoplasm. The catalysed reaction is guanosine(527) in 16S rRNA + S-adenosyl-L-methionine = N(7)-methylguanosine(527) in 16S rRNA + S-adenosyl-L-homocysteine. Functionally, specifically methylates the N7 position of guanine in position 527 of 16S rRNA. This chain is Ribosomal RNA small subunit methyltransferase G, found in Pseudomonas aeruginosa (strain LESB58).